The primary structure comprises 968 residues: Ribonuclease E (968 aa).

In terms of domain architecture, S1 motif spans serine 39–phenylalanine 119. Positions 303 and 346 each coordinate Mg(2+). Residues cysteine 404 and cysteine 407 each contribute to the Zn(2+) site. Residues cysteine 404–cysteine 407 are required for zinc-mediated homotetramerization and catalytic activity. The disordered stretch occupies residues isoleucine 947 to glutamate 968. Positions serine 955–glutamate 968 are enriched in polar residues.

The protein belongs to the RNase E/G family. RNase E subfamily. Component of the RNA degradosome, which is a multiprotein complex involved in RNA processing and mRNA degradation. Within the RNA degradosome, RNase E assembles into a homotetramer formed by a dimer of dimers. Zn(2+) serves as cofactor. Requires Mg(2+) as cofactor.

It is found in the cytoplasm. Its subcellular location is the cell inner membrane. The enzyme catalyses Endonucleolytic cleavage of single-stranded RNA in A- and U-rich regions.. In terms of biological role, endoribonuclease that plays a central role in RNA processing and decay. Required for the maturation of 5S and 16S rRNAs and the majority of tRNAs. Also involved in the degradation of most mRNAs. In Buchnera aphidicola subsp. Schizaphis graminum (strain Sg), this protein is Ribonuclease E.